Consider the following 194-residue polypeptide: Probable nicotinate-nucleotide adenylyltransferase (194 aa).

It belongs to the NadD family.

The enzyme catalyses nicotinate beta-D-ribonucleotide + ATP + H(+) = deamido-NAD(+) + diphosphate. It functions in the pathway cofactor biosynthesis; NAD(+) biosynthesis; deamido-NAD(+) from nicotinate D-ribonucleotide: step 1/1. Its function is as follows. Catalyzes the reversible adenylation of nicotinate mononucleotide (NaMN) to nicotinic acid adenine dinucleotide (NaAD). In Brucella suis biovar 1 (strain 1330), this protein is Probable nicotinate-nucleotide adenylyltransferase.